Consider the following 677-residue polypeptide: UvrABC system protein B (677 aa).

Residues 27 to 192 enclose the Helicase ATP-binding domain; that stretch reads ANLGQGVRDQ…QRNDFDFHRG (166 aa). ATP is bound at residue 40-47; the sequence is GVTGSGKT. The Beta-hairpin signature appears at 93 to 116; the sequence is YYDYYQPEAYVPASDTYIEKDSSI. The Helicase C-terminal domain maps to 432-594; it reads QVDDLLAECR…IEPRTIRKSL (163 aa). The 36-residue stretch at 638-673 folds into the UVR domain; it reads AKHIQKLEREMREAAKELEFERAATLRDRIRLLRER.

The protein belongs to the UvrB family. In terms of assembly, forms a heterotetramer with UvrA during the search for lesions. Interacts with UvrC in an incision complex.

It is found in the cytoplasm. In terms of biological role, the UvrABC repair system catalyzes the recognition and processing of DNA lesions. A damage recognition complex composed of 2 UvrA and 2 UvrB subunits scans DNA for abnormalities. Upon binding of the UvrA(2)B(2) complex to a putative damaged site, the DNA wraps around one UvrB monomer. DNA wrap is dependent on ATP binding by UvrB and probably causes local melting of the DNA helix, facilitating insertion of UvrB beta-hairpin between the DNA strands. Then UvrB probes one DNA strand for the presence of a lesion. If a lesion is found the UvrA subunits dissociate and the UvrB-DNA preincision complex is formed. This complex is subsequently bound by UvrC and the second UvrB is released. If no lesion is found, the DNA wraps around the other UvrB subunit that will check the other stand for damage. In Nitratidesulfovibrio vulgaris (strain DP4) (Desulfovibrio vulgaris), this protein is UvrABC system protein B.